The chain runs to 232 residues: Large ribosomal subunit protein uL1 (232 aa).

This sequence belongs to the universal ribosomal protein uL1 family. In terms of assembly, part of the 50S ribosomal subunit.

Binds directly to 23S rRNA. The L1 stalk is quite mobile in the ribosome, and is involved in E site tRNA release. Its function is as follows. Protein L1 is also a translational repressor protein, it controls the translation of the L11 operon by binding to its mRNA. The sequence is that of Large ribosomal subunit protein uL1 from Aliarcobacter butzleri (strain RM4018) (Arcobacter butzleri).